The chain runs to 276 residues: Ammonia monooxygenase alpha subunit (276 aa).

The next 5 helical transmembrane spans lie at 29 to 49 (VYFPILIILLVGTYHMHFMLL), 66 to 86 (PVVTPIVGITYCSAIMYYLWV), 96 to 116 (LCVVCLLIGEWLTRYWGFYWW), 123 to 143 (FVTPGIMLPGALMLDFTLYLT), and 150 to 170 (ALVGGGFFGLLFYPGNWPIFG). Residues aspartate 187, histidine 191, and histidine 204 each contribute to the Cu(+) site. The chain crosses the membrane as a helical span at residues 219-239 (VIAAFFSAFVSMLMFTVWWYL).

As to quaternary structure, the soluble ammonia monooxygenase is a nonamer composed of three alpha subunits (AmoA), three beta subunits (AmoB) and three gamma subunits (Cytochrome c1 PetC). The cofactor is Cu(+).

The protein localises to the cell membrane. It is found in the cytoplasm. The catalysed reaction is AH2 + NH4(+) + O2 = hydroxylamine + A + H2O + H(+). With respect to regulation, in vitro, inhibited by acetylene. In fact, acetylene is oxidized to ketene which binds irreversibly to His-191 of ammonia monooxygenase alpha subunit (AmoA). Its function is as follows. Part of the ammonia monooxygenase complex, which catalyzes the oxidation of ammonia to hydroxylamine, the first reaction in the process of ammonia oxidation to nitrite. This Nitrosomonas europaea (strain ATCC 19718 / CIP 103999 / KCTC 2705 / NBRC 14298) protein is Ammonia monooxygenase alpha subunit.